The primary structure comprises 439 residues: MKYIYIKTWGCQMNEYDSSMITVFLEKTGRYLITKEVEKADILILNTCSIREKAQEKVFHQLGRWKKLKNKKPDVIIAVGGCVATQEGKEIFKRANYVDIVFGTQTLHKLAQMIDKVEKNRRFMIDISFPQLEKFNYSLEPKKTGYTASISIMEGCNKYCSFCVVPYTRGHEISRPSDDILLEISILAENGVREINLLGQNVNAYRGRTFNGKICFFSELLRLVSEIDGIDRIRFTTSNPLEFTDDIIEVYQDTPKLVSFLHLPVQSGSNRILQLMKRSYTTEEYEKIIEKLILARSNIQISSDFIVGFPSESEEDFQKTINFIKKINFDMSFSFIYSSRPGTPASEMKDNIDLQEKKKRLYTLQNCINKQTMSWSRKMLKSTQSVLVEGVSKKNIMELYGKTENNRIVTFKGSHKMIGKFIKLKIKKVHTHSLQGELI.

One can recognise an MTTase N-terminal domain in the interval 2–119 (KYIYIKTWGC…LAQMIDKVEK (118 aa)). The [4Fe-4S] cluster site is built by Cys11, Cys48, Cys82, Cys156, Cys160, and Cys163. Positions 142-374 (KKTGYTASIS…QNCINKQTMS (233 aa)) constitute a Radical SAM core domain. In terms of domain architecture, TRAM spans 377-439 (RKMLKSTQSV…HTHSLQGELI (63 aa)).

Belongs to the methylthiotransferase family. MiaB subfamily. As to quaternary structure, monomer. [4Fe-4S] cluster serves as cofactor.

It is found in the cytoplasm. The catalysed reaction is N(6)-dimethylallyladenosine(37) in tRNA + (sulfur carrier)-SH + AH2 + 2 S-adenosyl-L-methionine = 2-methylsulfanyl-N(6)-dimethylallyladenosine(37) in tRNA + (sulfur carrier)-H + 5'-deoxyadenosine + L-methionine + A + S-adenosyl-L-homocysteine + 2 H(+). Functionally, catalyzes the methylthiolation of N6-(dimethylallyl)adenosine (i(6)A), leading to the formation of 2-methylthio-N6-(dimethylallyl)adenosine (ms(2)i(6)A) at position 37 in tRNAs that read codons beginning with uridine. The sequence is that of tRNA-2-methylthio-N(6)-dimethylallyladenosine synthase from Buchnera aphidicola subsp. Schizaphis graminum (strain Sg).